The primary structure comprises 332 residues: MYTLGEIAKTINAKLVGDANIEITGIATSLSANQTQLTYINGNKYKQMLINSKAGVVILNNNLLKNCPTNALVVDNVYLAFAKATHLFKKQTVHCQGTHSSAKINYAKIAPNCIIGKNVVIGNHCTIAPNVVIEDDVIIGNYTLIQPNVSILQGCSIGNNVVISPGVVIGSEGFGNAQDQQKHWYSIAHLGYVIIGSNVSIGANTTIDRGTIEDTQIHNGVQIDNLVHIAHNVIIGQDSAIAATVTIGGSCTIGKRCMIGGGATIASHISLVDDIIVTGASTVDKNLSEQGHYTGFTSINKHQKWKKIQVWLLNLDKIAHYLNIKLKELKGK.

The active-site Proton acceptor is the His231.

Belongs to the transferase hexapeptide repeat family. LpxD subfamily. In terms of assembly, homotrimer.

The catalysed reaction is a UDP-3-O-[(3R)-3-hydroxyacyl]-alpha-D-glucosamine + a (3R)-hydroxyacyl-[ACP] = a UDP-2-N,3-O-bis[(3R)-3-hydroxyacyl]-alpha-D-glucosamine + holo-[ACP] + H(+). The protein operates within bacterial outer membrane biogenesis; LPS lipid A biosynthesis. In terms of biological role, catalyzes the N-acylation of UDP-3-O-acylglucosamine using 3-hydroxyacyl-ACP as the acyl donor. Is involved in the biosynthesis of lipid A, a phosphorylated glycolipid that anchors the lipopolysaccharide to the outer membrane of the cell. This Ruthia magnifica subsp. Calyptogena magnifica protein is UDP-3-O-acylglucosamine N-acyltransferase.